The following is a 334-amino-acid chain: N-acetyl-gamma-glutamyl-phosphate reductase (334 aa).

Cysteine 154 is an active-site residue.

Belongs to the NAGSA dehydrogenase family. Type 1 subfamily.

It localises to the cytoplasm. The enzyme catalyses N-acetyl-L-glutamate 5-semialdehyde + phosphate + NADP(+) = N-acetyl-L-glutamyl 5-phosphate + NADPH + H(+). The protein operates within amino-acid biosynthesis; L-arginine biosynthesis; N(2)-acetyl-L-ornithine from L-glutamate: step 3/4. Catalyzes the NADPH-dependent reduction of N-acetyl-5-glutamyl phosphate to yield N-acetyl-L-glutamate 5-semialdehyde. This chain is N-acetyl-gamma-glutamyl-phosphate reductase, found in Photorhabdus laumondii subsp. laumondii (strain DSM 15139 / CIP 105565 / TT01) (Photorhabdus luminescens subsp. laumondii).